Consider the following 439-residue polypeptide: ATP-dependent protease ATPase subunit HslU (439 aa).

ATP is bound by residues I17, G59 to E64, D251, E317, and R389.

Belongs to the ClpX chaperone family. HslU subfamily. In terms of assembly, a double ring-shaped homohexamer of HslV is capped on each side by a ring-shaped HslU homohexamer. The assembly of the HslU/HslV complex is dependent on binding of ATP.

Its subcellular location is the cytoplasm. In terms of biological role, ATPase subunit of a proteasome-like degradation complex; this subunit has chaperone activity. The binding of ATP and its subsequent hydrolysis by HslU are essential for unfolding of protein substrates subsequently hydrolyzed by HslV. HslU recognizes the N-terminal part of its protein substrates and unfolds these before they are guided to HslV for hydrolysis. The polypeptide is ATP-dependent protease ATPase subunit HslU (Campylobacter jejuni (strain RM1221)).